The chain runs to 1125 residues: Protein efr-3 (1125 aa).

4 disordered regions span residues 240 to 261 (RTSN…PNPI), 471 to 493 (RPSR…NGAA), 788 to 819 (TSPP…KDET), and 845 to 1093 (QAGS…LGEK). Residues 242–252 (SNATAQPSETT) are compositionally biased toward polar residues. Residues 788-798 (TSPPTSPTTSP) are compositionally biased toward low complexity. Positions 845–854 (QAGSSQTASL) are enriched in polar residues. Low complexity predominate over residues 855 to 877 (NGTNGTHRNTVNNNNRLGVNGVT). 3 stretches are compositionally biased toward polar residues: residues 878 to 896 (SPNG…TGPN), 975 to 1011 (LSFN…TQQL), and 1046 to 1071 (SRTT…TSSK).

It belongs to the EFR3 family.

The sequence is that of Protein efr-3 (efr-3) from Neurospora crassa (strain ATCC 24698 / 74-OR23-1A / CBS 708.71 / DSM 1257 / FGSC 987).